Here is a 776-residue protein sequence, read N- to C-terminus: Probable exo-1,4-beta-xylosidase bxlB (776 aa).

The first 23 residues, 1-23 (MVHLSPLLRPLAAFSFFTSLAST), serve as a signal peptide directing secretion. 2 N-linked (GlcNAc...) asparagine glycosylation sites follow: Asn-65 and Asn-105. Asp-291 is a catalytic residue. Residues Asn-343, Asn-410, Asn-421, Asn-462, Asn-623, and Asn-766 are each glycosylated (N-linked (GlcNAc...) asparagine).

It belongs to the glycosyl hydrolase 3 family.

Its subcellular location is the secreted. The enzyme catalyses Hydrolysis of (1-&gt;4)-beta-D-xylans, to remove successive D-xylose residues from the non-reducing termini.. It participates in glycan degradation; xylan degradation. In terms of biological role, xylan 1,4-beta-xylosidase involved in the hydrolysis of xylan, a major structural heterogeneous polysaccharide found in plant biomass representing the second most abundant polysaccharide in the biosphere, after cellulose. The chain is Probable exo-1,4-beta-xylosidase bxlB (bxlB) from Aspergillus flavus (strain ATCC 200026 / FGSC A1120 / IAM 13836 / NRRL 3357 / JCM 12722 / SRRC 167).